The sequence spans 493 residues: 3-octaprenyl-4-hydroxybenzoate carboxy-lyase (493 aa).

N172 serves as a coordination point for Mn(2+). Prenylated FMN is bound by residues 175-177 (IYR), 189-191 (RWL), and 194-195 (RG). A Mn(2+)-binding site is contributed by E238. Residue D287 is the Proton donor of the active site.

The protein belongs to the UbiD family. In terms of assembly, homohexamer. Prenylated FMN is required as a cofactor. It depends on Mn(2+) as a cofactor.

It is found in the cell membrane. The enzyme catalyses a 4-hydroxy-3-(all-trans-polyprenyl)benzoate + H(+) = a 2-(all-trans-polyprenyl)phenol + CO2. The protein operates within cofactor biosynthesis; ubiquinone biosynthesis. Functionally, catalyzes the decarboxylation of 3-octaprenyl-4-hydroxy benzoate to 2-octaprenylphenol, an intermediate step in ubiquinone biosynthesis. In Shewanella halifaxensis (strain HAW-EB4), this protein is 3-octaprenyl-4-hydroxybenzoate carboxy-lyase.